The sequence spans 205 residues: High frequency lysogenization protein HflD homolog (205 aa).

The protein belongs to the HflD family.

The protein resides in the cytoplasm. It localises to the cell inner membrane. The sequence is that of High frequency lysogenization protein HflD homolog from Shewanella pealeana (strain ATCC 700345 / ANG-SQ1).